Here is a 102-residue protein sequence, read N- to C-terminus: uncharacterized protein (102 aa).

The N-terminal stretch at 1–19 (MFLFCFVLFCSLVFPLARG) is a signal peptide.

This is an uncharacterized protein from Saccharomyces cerevisiae (strain ATCC 204508 / S288c) (Baker's yeast).